We begin with the raw amino-acid sequence, 354 residues long: Guanine nucleotide-binding protein G(t) subunit alpha-3 (354 aa).

Positions 1-26 are disordered; it reads MGIGISSESKESAKRSKELEKKLQED. Gly2 carries N-myristoyl glycine lipidation. Over residues 8 to 26 the composition is skewed to basic and acidic residues; it reads ESKESAKRSKELEKKLQED. One can recognise a G-alpha domain in the interval 32–354; it reads RTVKLLLLGA…KENLKDCGLF (323 aa). Residues 35-48 are G1 motif; that stretch reads KLLLLGAGESGKST. Residues 40–47, 175–181, 200–204, 269–272, and Ala326 each bind GTP; these read GAGESGKS, LHSRVKT, DVGGQ, and NKKD. Residues Ser47 and Thr181 each contribute to the Mg(2+) site. The interval 173 to 181 is G2 motif; sequence DVLHSRVKT. The tract at residues 196–205 is G3 motif; the sequence is FRMFDVGGQR. A G4 motif region spans residues 265-272; sequence VLFLNKKD. The interval 324–329 is G5 motif; sequence TCATDT.

It belongs to the G-alpha family. G(i/o/t/z) subfamily. As to quaternary structure, g proteins are composed of 3 units; alpha, beta and gamma, respectively GNAT3, GNB1 and GNG13 for Gustducin heterotrimer for bitter taste transduction. The alpha chain contains the guanine nucleotide binding site. Component of the TAS2R14-GNAT3 complex, consisting of TAS2R14, GNAT3, GNB1 and GNG2; within the complex interacts with TAS2R14; this complex plays a role in the perception of bitterness. Gustducin heterotrimer may also be composed of GNAT3, GNB3 and GNG13. In terms of tissue distribution, expressed in epithelial cells of taste buds of the circumvallate, foliate and fungiform. Detected in various region of the respiratory track. Expressed also in spermatozoa.

It localises to the cytoplasm. Its function is as follows. Guanine nucleotide-binding protein (G protein) alpha subunit playing a prominent role in bitter and sweet taste transduction as well as in umami (monosodium glutamate, monopotassium glutamate, and inosine monophosphate) taste transduction. This chain is Guanine nucleotide-binding protein G(t) subunit alpha-3 (GNAT3), found in Bos taurus (Bovine).